A 157-amino-acid chain; its full sequence is Transcription antitermination protein NusB (157 aa).

It belongs to the NusB family.

Involved in transcription antitermination. Required for transcription of ribosomal RNA (rRNA) genes. Binds specifically to the boxA antiterminator sequence of the ribosomal RNA (rrn) operons. The sequence is that of Transcription antitermination protein NusB from Helicobacter hepaticus (strain ATCC 51449 / 3B1).